Consider the following 143-residue polypeptide: Large ribosomal subunit protein uL11 (143 aa).

The protein belongs to the universal ribosomal protein uL11 family. As to quaternary structure, part of the ribosomal stalk of the 50S ribosomal subunit. Interacts with L10 and the large rRNA to form the base of the stalk. L10 forms an elongated spine to which L12 dimers bind in a sequential fashion forming a multimeric L10(L12)X complex. One or more lysine residues are methylated.

In terms of biological role, forms part of the ribosomal stalk which helps the ribosome interact with GTP-bound translation factors. The sequence is that of Large ribosomal subunit protein uL11 from Paraburkholderia phytofirmans (strain DSM 17436 / LMG 22146 / PsJN) (Burkholderia phytofirmans).